We begin with the raw amino-acid sequence, 343 residues long: Anthranilate phosphoribosyltransferase (343 aa).

Residues Gly-84, 87-88 (GD), Thr-92, 94-97 (NIST), 112-120 (KHGNRSASS), and Ser-124 contribute to the 5-phospho-alpha-D-ribose 1-diphosphate site. An anthranilate-binding site is contributed by Gly-84. Mg(2+) is bound at residue Ser-96. Asn-115 lines the anthranilate pocket. Anthranilate is bound at residue Arg-170. Positions 229 and 230 each coordinate Mg(2+).

Belongs to the anthranilate phosphoribosyltransferase family. As to quaternary structure, homodimer. It depends on Mg(2+) as a cofactor.

The catalysed reaction is N-(5-phospho-beta-D-ribosyl)anthranilate + diphosphate = 5-phospho-alpha-D-ribose 1-diphosphate + anthranilate. It participates in amino-acid biosynthesis; L-tryptophan biosynthesis; L-tryptophan from chorismate: step 2/5. Functionally, catalyzes the transfer of the phosphoribosyl group of 5-phosphorylribose-1-pyrophosphate (PRPP) to anthranilate to yield N-(5'-phosphoribosyl)-anthranilate (PRA). The sequence is that of Anthranilate phosphoribosyltransferase from Bordetella bronchiseptica (strain ATCC BAA-588 / NCTC 13252 / RB50) (Alcaligenes bronchisepticus).